Reading from the N-terminus, the 212-residue chain is Peptide methionine sulfoxide reductase MsrA (212 aa).

The active site involves Cys-52.

This sequence belongs to the MsrA Met sulfoxide reductase family.

It catalyses the reaction L-methionyl-[protein] + [thioredoxin]-disulfide + H2O = L-methionyl-(S)-S-oxide-[protein] + [thioredoxin]-dithiol. It carries out the reaction [thioredoxin]-disulfide + L-methionine + H2O = L-methionine (S)-S-oxide + [thioredoxin]-dithiol. Its function is as follows. Has an important function as a repair enzyme for proteins that have been inactivated by oxidation. Catalyzes the reversible oxidation-reduction of methionine sulfoxide in proteins to methionine. The protein is Peptide methionine sulfoxide reductase MsrA of Salmonella schwarzengrund (strain CVM19633).